Here is a 172-residue protein sequence, read N- to C-terminus: Small ribosomal subunit protein uS5 (172 aa).

The 64-residue stretch at 15 to 78 folds into the S5 DRBM domain; the sequence is YIEKLVNIRR…DKARKRMKSV (64 aa).

This sequence belongs to the universal ribosomal protein uS5 family. Part of the 30S ribosomal subunit. Contacts proteins S4 and S8.

In terms of biological role, with S4 and S12 plays an important role in translational accuracy. Its function is as follows. Located at the back of the 30S subunit body where it stabilizes the conformation of the head with respect to the body. This Ruthia magnifica subsp. Calyptogena magnifica protein is Small ribosomal subunit protein uS5.